The sequence spans 340 residues: Methionine import ATP-binding protein MetN 2 (340 aa).

Residues 5 to 244 form the ABC transporter domain; sequence VRFESVTKTF…PQAPASKSFV (240 aa). An ATP-binding site is contributed by 41–48; the sequence is GYSGAGKS.

Belongs to the ABC transporter superfamily. Methionine importer (TC 3.A.1.24) family. In terms of assembly, the complex is composed of two ATP-binding proteins (MetN), two transmembrane proteins (MetI) and a solute-binding protein (MetQ).

The protein localises to the cell membrane. It carries out the reaction L-methionine(out) + ATP + H2O = L-methionine(in) + ADP + phosphate + H(+). It catalyses the reaction D-methionine(out) + ATP + H2O = D-methionine(in) + ADP + phosphate + H(+). In terms of biological role, part of the ABC transporter complex MetNIQ involved in methionine import. Responsible for energy coupling to the transport system. The sequence is that of Methionine import ATP-binding protein MetN 2 from Rhodococcus jostii (strain RHA1).